The chain runs to 263 residues: NADH dehydrogenase [ubiquinone] iron-sulfur protein 3, mitochondrial (263 aa).

The transit peptide at 1–35 (MAAAAARVWCRGLLGAASVGRGAGRPSVLWQHVRR) directs the protein to the mitochondrion.

It belongs to the complex I 30 kDa subunit family. As to quaternary structure, core subunit of respiratory chain NADH dehydrogenase (Complex I) which is composed of 45 different subunits. Interacts with NDUFAF3. Interacts with RAB5IF. Found in subcomplexes containing subunits NDUFS2, MT-ND1 and NDUFA13.

The protein resides in the mitochondrion inner membrane. It catalyses the reaction a ubiquinone + NADH + 5 H(+)(in) = a ubiquinol + NAD(+) + 4 H(+)(out). In terms of biological role, core subunit of the mitochondrial membrane respiratory chain NADH dehydrogenase (Complex I) which catalyzes electron transfer from NADH through the respiratory chain, using ubiquinone as an electron acceptor. Essential for the catalytic activity and assembly of complex I. The protein is NADH dehydrogenase [ubiquinone] iron-sulfur protein 3, mitochondrial (Ndufs3) of Mus musculus (Mouse).